The following is a 156-amino-acid chain: MNINATLIGQAIWFALFIWITMKYVWPPLQKAMADRQAQIAEGLAAAERGKHEQELAAKRSADALREAKEKSADFVAQAEKRAQQIVEEAKGTAKIEADKVVAGAKAEIEQEVERAKQQLRERVAELAVAGAEKILRKEINASAHADMLAALKQDL.

The chain crosses the membrane as a helical span at residues 7–26 (LIGQAIWFALFIWITMKYVW).

The protein belongs to the ATPase B chain family. As to quaternary structure, F-type ATPases have 2 components, F(1) - the catalytic core - and F(0) - the membrane proton channel. F(1) has five subunits: alpha(3), beta(3), gamma(1), delta(1), epsilon(1). F(0) has three main subunits: a(1), b(2) and c(10-14). The alpha and beta chains form an alternating ring which encloses part of the gamma chain. F(1) is attached to F(0) by a central stalk formed by the gamma and epsilon chains, while a peripheral stalk is formed by the delta and b chains.

The protein resides in the cell inner membrane. Its function is as follows. F(1)F(0) ATP synthase produces ATP from ADP in the presence of a proton or sodium gradient. F-type ATPases consist of two structural domains, F(1) containing the extramembraneous catalytic core and F(0) containing the membrane proton channel, linked together by a central stalk and a peripheral stalk. During catalysis, ATP synthesis in the catalytic domain of F(1) is coupled via a rotary mechanism of the central stalk subunits to proton translocation. Component of the F(0) channel, it forms part of the peripheral stalk, linking F(1) to F(0). The protein is ATP synthase subunit b of Dechloromonas aromatica (strain RCB).